We begin with the raw amino-acid sequence, 361 residues long: [LysW]-lysine hydrolase (361 aa).

His-67 is a binding site for Zn(2+). Asp-69 is an active-site residue. Residue Asp-91 participates in Zn(2+) binding. The active-site Proton acceptor is the Glu-124. Glu-125, Glu-148, and His-326 together coordinate Zn(2+).

The protein belongs to the peptidase M20A family. LysK subfamily. Requires Zn(2+) as cofactor. It depends on Co(2+) as a cofactor.

Its subcellular location is the cytoplasm. The catalysed reaction is [amino-group carrier protein]-C-terminal-gamma-(L-lysyl)-L-glutamate + H2O = [amino-group carrier protein]-C-terminal-L-glutamate + L-lysine. It functions in the pathway amino-acid biosynthesis; L-lysine biosynthesis via AAA pathway; L-lysine from L-alpha-aminoadipate (Thermus route): step 5/5. In terms of biological role, catalyzes the release of L-lysine from [LysW]-gamma-L-lysine. The polypeptide is [LysW]-lysine hydrolase (Thermus thermophilus (strain ATCC 27634 / DSM 579 / HB8)).